We begin with the raw amino-acid sequence, 293 residues long: Protease HtpX (293 aa).

2 helical membrane passes run 4-24 and 33-53; these read ISLF…VLSL and AGLM…SLLM. His-139 serves as a coordination point for Zn(2+). Glu-140 is a catalytic residue. His-143 is a binding site for Zn(2+). The next 2 helical transmembrane spans lie at 158–178 and 193–213; these read VVNT…AGFM and LVYF…ASII. Glu-222 serves as a coordination point for Zn(2+).

The protein belongs to the peptidase M48B family. Zn(2+) is required as a cofactor.

The protein resides in the cell inner membrane. This Sodalis glossinidius (strain morsitans) protein is Protease HtpX.